The primary structure comprises 105 residues: Heat shock protein HspQ (105 aa).

It belongs to the HspQ family.

The protein localises to the cytoplasm. Functionally, involved in the degradation of certain denaturated proteins, including DnaA, during heat shock stress. This is Heat shock protein HspQ from Baumannia cicadellinicola subsp. Homalodisca coagulata.